Reading from the N-terminus, the 2737-residue chain is MTHTTGPTKASGESTIFLFGPHVGTFTKQSMNKLVHPLSQSPQRDWILDTIAELPGYWDALAAKMPDVARDIDGSRSLAELDSWLRHGSANLGEDDSNLPSIIVGPLVVFIQLTQYWRHLELTKAGTQATDLQADLVAMHSNQTGDKVEILGFCAGLLAALAVASSNNRQEFQKYGAVAVRLAMLIGALIDAQEVWDKASGKGSSSSYAVAWRGPKQEEDMTRIIDDLAANAYIAVRYDQTRATVTASETIAPLLLKRFRAAGITVAEVGIKGQIHSPNPDRRAHTNALVDLCNSLPGLQYAAAERLALQTYDNQGDGKPLLPDRGSLTEMVLRSILVQQCHWYDTFSAVTERHQDPYVVTFGLERCVPPTLMRSLGGRQVFFEDLPKDPSHPSSWMPNAPHGPQQQLQQRQLPVEVHTKPAFDVSNEAIAIVGMSVKTAGADDLAEFAEMLKTGQSQHIPITRDRLMHDMLFRESADSDPKRKYYGCFFRDGDAFDHKFFKRSPREAAAMDPQSRIVLQTAYQAIEQSGYFAEDHTGYTPDGRDKAHVGVYLGSCGVDYEHNISCHDPNAFTATGALKSFITGRVSHLFGWTGPCMTFDTACSSSAVAIHTACRNLLSGECTAALAGGSNTVTNMNWFQNLAAGSFVSPTGQCKPFDDDADGYCRAEGAAFVFLKRLSDAVRDGNPILATIASSAVYQNQNCTPLFVPNSPSLSHLFKDVMHQAKITANDVSLVEAHGTGTPVGDPAEYESIRVALGGPIRKKTLPIGSVKGHIGHTEGASGAIALVKIIMMMREGFIPPQASFKKMNRKIPVRADDNMEVVTKLRPWDEPHKTALLNNYGACGSNASMIITEPDKALSGPIDGSRYRNTGQRYPFWIPGFDSRAITAYCAKLGSWLRSCRQEPTLADVSFNVNRQSNRSLTQGFIFNCRSMTELHEKLEQAAAAGKDAAANAGITPVKAERPVVLCFGGQVSRFVGLDRNLFESVAILRQHLDHVDAVVTSQGLGSIYPEIFEREPVRDTVKLQTMLFALQYACAKSWMDSGLQGKVQAVVGHSFGEITALCIAGVLSLEHTVQLVAARAALVRDNWGADPGAMMAIEADENLVNELLLEANRGSDGSASIACYNGPRSFTIAGSTGAIDAVQQTMGSNSKFGSIKSKRLSVTNAFHSALVDKISDGLERIGKTLTFHRPIIPVERATEMPFDMDNLDGSFVSQHMRQPVYFNHALQRLVKRYPQAIFLEAGSSSTITIMASRAIAQSQASSSDAHHFQAMSITSDTAFDSLTDATMALWKQGLRVSFWAHHAVQARDYAQLLLPPYQFDTSSRHWLPMKSPLEEVKKAAAAMVAAGGDVGTGQHQQNDALQDPRLQSLWNFVEFQDGDNKKPRFRINTGSDKYNRFVLSHVIAQTAPICPGTLECDIVIEALFSLEPTWKQEGVQPVVRDMINHSPICKDPSRTVYLDLTALNKKRTQWTVRIFSVDSNSSRQASETHAEASVEMRAPTDAAHLREFANFERLVSHQQCLDVLRLNLDEEGVEVLQGRNVYRAFNPIVDYGDVYRGVRYVVGRGNECAGSVQLPKCHRGDTWLDVPLSDSFSQVGGIWVNLLTDLPPSDMYIATGCGLSMRSPTAPPRADTDVWHVYARHSRQGDKAFMTDLFVFDPATGQLVELMLGVQYGRVAKASMSMMLARMTKDESVLRTKTPSSSHPAPTVKSVPIEASVAVKASRTTKKKAKASKSKSSVKKDKAPSGWRDITDEVRNLVATVSGIEASELELDSEMADFGIDSLMGMELGKEVETAFKCTLDQNEQMEATTLRKFVACVSNALFGPNQGQSSIDEDDEDDEHSEDSSNESSSAASDEDASSGLESPDTGILTPEDEPLPLKAVAIHKAAGLAAIAPPVESHLALSASDILESFGEVKMTTDRLMHEYGVHKTEKVMLAGSNRLCAALVVEAFDELGSPLRTAAAGQVIDRVPFLPQHGRLMQWVYEFLERDARLIDIDVTSGQITRTHIAPPRKTSHAILQELLASDPDFAVPNRLAYYAGKQLAGVLSGSTDGIRVLFGSPEGRELTAAMYCEHTFNCMSYAQMREVTKILADRIQSSSGSSGETFKVLEMGAGTGGTTLVMAPLLASLSDMGMAVEYTFTDISPSMVANARRRFSKLYPFMRFSVHDIEKAPADELKGQHLVLASNAIHATHNLGVSLSNIHQALRPDGFLMMLEMTEVVPFVDLVFGLLEGWWLFDDGRSHAVVPAEHWERELHAAGFGHVDWTDGSLPENAFQKVIIALASGTQGPRLPKPASVPEPIPELNPKSIETRTAHAEQLTATYSKGWATPKLRALDAKSEEGQVKPSGTSRLRKVDLGAVVLVTGATGSLGSHLVQKLADDPNVAQVVCLNRRSNSMPADKRQQEALATRGITLSPGGRAKLRILETDTSKAQLGLPPLEYSWLVEHGTDIVHNAWPMSGTRPVSAFEPQLQAMRNLLDLARDMACRDINPPSRVGFQFVSSIGVVGFVGESRVTERRVPLSATLPSGYGEAKWVCERMLDETLHKYPRLFRPMVVRPGQISGSSTSGFWNPVEHFAFLVKSAQALRAWPDLDGVLQWIPVNFCAGIIVDLLKIASRADDAYPVYHIDNPVGQPWKAMNPVLASALDIPPHAIIPFKDWISRVRRSPLPLETENPAARLVDFLDDHFERMSCGGLVLDTSKALEHSQTMATVGPVSSDVARLYVASWKKMGYLHS.

The segment at 75–245 (SRSLAELDSW…VRYDQTRATV (171 aa)) is N-terminal acylcarrier protein transacylase domain (SAT). Cysteine 154 serves as the catalytic Nucleophile; for transacylase activity. Histidine 276 functions as the Proton donor/acceptor; for transacylase activity in the catalytic mechanism. Positions 427 to 854 (NEAIAIVGMS…GSNASMIITE (428 aa)) constitute a Ketosynthase family 3 (KS3) domain. Residues cysteine 603, histidine 738, and histidine 777 each act as for beta-ketoacyl synthase activity in the active site. The interval 969-1260 (FGGQVSRFVG…IMASRAIAQS (292 aa)) is malonyl-CoA:ACP transacylase (MAT). Residues 1368–1503 (LQSLWNFVEF…ASVEMRAPTD (136 aa)) are N-terminal hotdog fold. A PKS/mFAS DH domain is found at 1368–1683 (LQSLWNFVEF…YGRVAKASMS (316 aa)). A product template (PT) domain region spans residues 1399-1681 (FVLSHVIAQT…VQYGRVAKAS (283 aa)). The Proton acceptor; for dehydratase activity role is filled by histidine 1403. The interval 1535-1683 (VEVLQGRNVY…YGRVAKASMS (149 aa)) is C-terminal hotdog fold. Catalysis depends on aspartate 1592, which acts as the Proton donor; for dehydratase activity. Residues 1724 to 1747 (SRTTKKKAKASKSKSSVKKDKAPS) are disordered. The segment covering 1725–1739 (RTTKKKAKASKSKSS) has biased composition (basic residues). Positions 1750-1824 (RDITDEVRNL…KFVACVSNAL (75 aa)) constitute a Carrier domain. An O-(pantetheine 4'-phosphoryl)serine modification is found at serine 1784. Residues 1827-1876 (PNQGQSSIDEDDEDDEHSEDSSNESSSAASDEDASSGLESPDTGILTPED) form a disordered region. The span at 1834–1848 (IDEDDEDDEHSEDSS) shows a compositional bias: acidic residues. Positions 1849-1866 (NESSSAASDEDASSGLES) are enriched in low complexity. The segment at 2094–2270 (ADRIQSSSGS…GFGHVDWTDG (177 aa)) is methyltransferase domain. Positions 2362–2665 (VVLVTGATGS…IPFKDWISRV (304 aa)) are NADPH-binding domain.

It functions in the pathway secondary metabolite biosynthesis. Functionally, non-reducing polyketide synthase; part of the cluster B that mediates the biosynthesis of azasperpyranones, members of the azaphilone family that exhibit anti-cancer activities. Azasperpyranones are synthesized by 2 clusters, A and B. Cluster A is responsible for the production of the polyhydric phenol moiety while the azaphilonoid scaffold is produced by the cluster B. The non-reducing polyketide synthase ATEG_03629 produces 5-methyl orsellinic acid, which is then reduced to 5-methyl orsellinic aldehyde by the NRPS-like protein ATEG_03630. 5-methyl orsellinic aldehyde is then first hydroxylated by the FAD-dependent monooxygenase ATEG_03635 and subsequently hydroxylated by the cytochrome P450 monooxygenase ATEG_03631 to produce the unstable polyhydric phenol precursor of azasperpyranones. On the other hand, the polyketide synthase ATEG_07659 is responsible for producing the 3,5-dimethyloctadienone moiety from acetyl-CoA, three malonyl-CoA, and two S-adenosyl methionines (SAM). The 3,5-dimethyloctadienone moiety is then loaded onto the SAT domain of ATEG_07661 and extended with four malonyl-CoA and one SAM, which leads to the formation of 2,4-dihydroxy-6-(5,7-dimethyl-2-oxo-trans-3-trans-5-nonadienyl)-3-methylbenzaldehyde (compound 8) after reductive release and aldol condensation. The FAD-dependent monooxygenase ATEG_07662 is the next enzyme in the biosynthesis sequence and hydroxylates the side chain at the benzylic position of compound 8. In Aspergillus nidulans, afoF, the ortholog of the FAD-dependent oxygenase ATEG_07660, is the key enzyme for the biosynthesis of asperfuranone by catalyzing the hydroxylation at C-8 of to prevent the formation of a six-membered ring hemiacetal intermediate and thus facilitating the formation of a five-membered ring to produce asperfuranone. In Aspergillus terreus, ATEG_07660 is probably not functional, which leads to the formation of the six-membered ring hemiacetal intermediate presperpyranone instead of asperfuranone. Finally, ATEG_03636 is involved in the condensation of the polyhydric phenol moiety produced by cluster A and the perasperpyranone precursor produced by cluster B, to yield azasperpyranone A. Further modifications of azasperpyranone A result in the production of derivatives, including azasperpyranone B to F. The polypeptide is Non-reducing polyketide synthase ATEG_07661 (Aspergillus terreus (strain NIH 2624 / FGSC A1156)).